Consider the following 1392-residue polypeptide: Ankyrin repeat domain-containing protein 30B (1392 aa).

The segment at 1 to 21 (MKRLLAAAGKGVRGPEPPNPF) is disordered. ANK repeat units lie at residues 72 to 101 (KKRT…QLNV), 105 to 134 (EGRT…DLNY), 138 to 167 (YGNT…VIEV), 171 to 200 (ASLT…NANA), and 204 to 233 (SKCT…DVFA). 6 disordered regions span residues 265–292 (PKNP…ERTP), 558–587 (AQMF…VSQK), 636–656 (DRET…PTCG), 671–690 (RETL…PTCG), 830–877 (KEGA…SDSE), and 904–926 (GKIE…QNSV). Polar residues-rich tracts occupy residues 267-280 (NPQN…STGT) and 576-586 (DSESPCETVSQ). A compositionally biased stretch (basic and acidic residues) spans 636–650 (DRETFKAESPDKDGL). Residues 830-840 (KEGATKTVTGQ) show a composition bias toward polar residues. Basic and acidic residues-rich tracts occupy residues 864-874 (LGRKEDTKSTS) and 904-915 (GKIEESPEKPSH). 2 coiled-coil regions span residues 960-1168 (RELK…KQDK) and 1270-1318 (ETQC…QQLV).

Expressed in brain, breast and testis.

This is Ankyrin repeat domain-containing protein 30B (ANKRD30B) from Homo sapiens (Human).